The sequence spans 436 residues: MTDRTPPPGRARRLFSRTSWPEARFLADVLRTETFGGGLLLLGAVIALVWANSPWGGSYSALASWVPWPGGSDLHLDLDLATWAADGLLAIFFFVVGLELKREFVAGDLRDPRRAALPVIAAIGGMIVPALIYVGVNLSAGGENLRGWAIPTATDIAFALAVLAVIGSHLPQGLRAFLLTLAVVDDLLAITVIAIFYTGDFKLTPLLLALLPIALFGLLVQRRKTWWWALIPLAVVAWTLVHESGVHATVAGVLLGFTVPVLRGREGDRHGLAEHLEHRWRPVSAGFAVPVFAFFAAGVSLRGADLGAVITDPIVVGIVAGLVLGKVLGIFGSTFLLARFTRAELDRDITWTDLLGVSLLAGIGFTVSLLIGELAFEGGAADDNVKAAVLTGSLIAALLASIVLIRRNKAYRRIAVKERVDSNRDGVPDVFQHRDG.

Helical transmembrane passes span 35-55 (FGGG…NSPW), 80-100 (LATW…GLEL), 116-136 (ALPV…YVGV), 147-167 (GWAI…AVIG), 176-196 (AFLL…IAIF), 201-221 (FKLT…LLVQ), 226-246 (WWWA…ESGV), 283-303 (VSAG…SLRG), 313-333 (PIVV…IFGS), 354-374 (LLGV…IGEL), and 385-405 (VKAA…IVLI).

Belongs to the NhaA Na(+)/H(+) (TC 2.A.33) antiporter family.

It is found in the cell membrane. The catalysed reaction is Na(+)(in) + 2 H(+)(out) = Na(+)(out) + 2 H(+)(in). Na(+)/H(+) antiporter that extrudes sodium in exchange for external protons. In Salinispora tropica (strain ATCC BAA-916 / DSM 44818 / JCM 13857 / NBRC 105044 / CNB-440), this protein is Na(+)/H(+) antiporter NhaA 1.